We begin with the raw amino-acid sequence, 288 residues long: Homoserine kinase (288 aa).

79 to 89 contacts ATP; it reads PPARGLGSSSA.

The protein belongs to the GHMP kinase family. Homoserine kinase subfamily.

The protein localises to the cytoplasm. The catalysed reaction is L-homoserine + ATP = O-phospho-L-homoserine + ADP + H(+). It functions in the pathway amino-acid biosynthesis; L-threonine biosynthesis; L-threonine from L-aspartate: step 4/5. Its function is as follows. Catalyzes the ATP-dependent phosphorylation of L-homoserine to L-homoserine phosphate. The sequence is that of Homoserine kinase from Listeria monocytogenes serovar 1/2a (strain ATCC BAA-679 / EGD-e).